The primary structure comprises 497 residues: Protein nucleotidyltransferase YdiU (497 aa).

ATP is bound by residues G92, G94, R95, K114, D126, G127, R177, and R184. The active-site Proton acceptor is D261. N262 and D271 together coordinate Mg(2+). D271 contacts ATP.

The protein belongs to the SELO family. Mg(2+) serves as cofactor. Requires Mn(2+) as cofactor.

The enzyme catalyses L-seryl-[protein] + ATP = 3-O-(5'-adenylyl)-L-seryl-[protein] + diphosphate. It carries out the reaction L-threonyl-[protein] + ATP = 3-O-(5'-adenylyl)-L-threonyl-[protein] + diphosphate. It catalyses the reaction L-tyrosyl-[protein] + ATP = O-(5'-adenylyl)-L-tyrosyl-[protein] + diphosphate. The catalysed reaction is L-histidyl-[protein] + UTP = N(tele)-(5'-uridylyl)-L-histidyl-[protein] + diphosphate. The enzyme catalyses L-seryl-[protein] + UTP = O-(5'-uridylyl)-L-seryl-[protein] + diphosphate. It carries out the reaction L-tyrosyl-[protein] + UTP = O-(5'-uridylyl)-L-tyrosyl-[protein] + diphosphate. Functionally, nucleotidyltransferase involved in the post-translational modification of proteins. It can catalyze the addition of adenosine monophosphate (AMP) or uridine monophosphate (UMP) to a protein, resulting in modifications known as AMPylation and UMPylation. In Bordetella petrii (strain ATCC BAA-461 / DSM 12804 / CCUG 43448), this protein is Protein nucleotidyltransferase YdiU.